Reading from the N-terminus, the 297-residue chain is Protein-L-isoaspartate O-methyltransferase (297 aa).

The segment at 20–57 (RKPAPARTAGMPAVGAPGPAQAQAKARDKQPSAPTAAA) is disordered. Positions 28–43 (AGMPAVGAPGPAQAQA) are enriched in low complexity. Residue Ser133 is part of the active site.

It belongs to the methyltransferase superfamily. L-isoaspartyl/D-aspartyl protein methyltransferase family.

The protein localises to the cytoplasm. The catalysed reaction is [protein]-L-isoaspartate + S-adenosyl-L-methionine = [protein]-L-isoaspartate alpha-methyl ester + S-adenosyl-L-homocysteine. In terms of biological role, catalyzes the methyl esterification of L-isoaspartyl residues in peptides and proteins that result from spontaneous decomposition of normal L-aspartyl and L-asparaginyl residues. It plays a role in the repair and/or degradation of damaged proteins. The chain is Protein-L-isoaspartate O-methyltransferase from Cupriavidus pinatubonensis (strain JMP 134 / LMG 1197) (Cupriavidus necator (strain JMP 134)).